Here is a 96-residue protein sequence, read N- to C-terminus: Large ribosomal subunit protein bL25 (96 aa).

This sequence belongs to the bacterial ribosomal protein bL25 family. As to quaternary structure, part of the 50S ribosomal subunit; part of the 5S rRNA/L5/L18/L25 subcomplex. Contacts the 5S rRNA. Binds to the 5S rRNA independently of L5 and L18.

This is one of the proteins that binds to the 5S RNA in the ribosome where it forms part of the central protuberance. The chain is Large ribosomal subunit protein bL25 from Francisella philomiragia subsp. philomiragia (strain ATCC 25017 / CCUG 19701 / FSC 153 / O#319-036).